Reading from the N-terminus, the 949-residue chain is uncharacterized protein (949 aa).

The 107-residue stretch at 64-170 (LCSVHEAKKW…YCLHALSYLL (107 aa)) folds into the Calponin-homology (CH) domain.

It localises to the nucleus. This is an uncharacterized protein from Schizosaccharomyces pombe (strain 972 / ATCC 24843) (Fission yeast).